A 178-amino-acid chain; its full sequence is tRNA (cytidine(56)-2'-O)-methyltransferase (178 aa).

S-adenosyl-L-methionine is bound at residue Leu-88.

The protein belongs to the aTrm56 family. Homodimer.

It localises to the cytoplasm. The catalysed reaction is cytidine(56) in tRNA + S-adenosyl-L-methionine = 2'-O-methylcytidine(56) in tRNA + S-adenosyl-L-homocysteine + H(+). Its function is as follows. Specifically catalyzes the AdoMet-dependent 2'-O-ribose methylation of cytidine at position 56 in tRNAs. This chain is tRNA (cytidine(56)-2'-O)-methyltransferase, found in Methanopyrus kandleri (strain AV19 / DSM 6324 / JCM 9639 / NBRC 100938).